The primary structure comprises 75 residues: AAPLVAETDANAKSLGYVADTTKADKTKYPKHTKDQSCSTCALYQGKTAPQGACPLFAGKEVVAKGWCSAWAKKA.

4 residues coordinate [4Fe-4S] cluster: C38, C41, C54, and C68.

As to quaternary structure, homodimer. Monomer at different ionic strengths.

In terms of biological role, specific class of high-redox-potential 4Fe-4S ferredoxins. Functions in anaerobic electron transport in most purple and in some other photosynthetic bacteria and in at least one genus (Paracoccus) of halophilic, denitrifying bacteria. Competent in photosynthetic electron transfer to oxidized cytochrome bc1 complex via the membrane-bound c-type tetraheme. In Rhodoferax fermentans, this protein is High-potential iron-sulfur protein (hip).